Consider the following 215-residue polypeptide: Beta-crystallin A3 (215 aa).

The N-terminal arm stretch occupies residues 1-30 (MGEAAVPPELDTFPAAKMAQTNPLPVPMGP). 2 consecutive Beta/gamma crystallin 'Greek key' domains span residues 31 to 70 (WKIT…KVEC) and 71 to 117 (GAWV…RPVC). Residues 118 to 123 (SANHKE) are connecting peptide. Beta/gamma crystallin 'Greek key' domains are found at residues 124-165 (SKIT…KIPC) and 166-214 (GAWV…RRIQ).

This sequence belongs to the beta/gamma-crystallin family. Homo/heterodimer, or complexes of higher-order. The structure of beta-crystallin oligomers seems to be stabilized through interactions between the N-terminal arms.

Functionally, crystallins are the dominant structural components of the vertebrate eye lens. This is Beta-crystallin A3 (CRYBA1) from Gallus gallus (Chicken).